The chain runs to 248 residues: MNQTNFGLKKVDYTKKQGLVNNVFSNVADKYDLMNDLMSLGLHRLWKDEFIRQIPNLNSHILDVASGSGDIALKLAKKARDRVNNISLTLSDINEEMLKQAKKKAIDLNLFQNLKFTVASAEELPFPDDSFDYYTIAFGIRNVPDINKALKEACRVLKPMGKFICLEFSKVKEGYIKDFYKFYSFNIIPSIGQMIVGNKEAYEYLVESIELFPSQDEFRIMIKDAGFEEVGYKNLSGGIVAIHSAYTR.

Serine 68 and aspartate 92 together coordinate S-adenosyl-L-methionine.

Belongs to the class I-like SAM-binding methyltransferase superfamily. MenG/UbiE family.

It carries out the reaction a 2-demethylmenaquinol + S-adenosyl-L-methionine = a menaquinol + S-adenosyl-L-homocysteine + H(+). The enzyme catalyses a 2-methoxy-6-(all-trans-polyprenyl)benzene-1,4-diol + S-adenosyl-L-methionine = a 5-methoxy-2-methyl-3-(all-trans-polyprenyl)benzene-1,4-diol + S-adenosyl-L-homocysteine + H(+). Its pathway is quinol/quinone metabolism; menaquinone biosynthesis; menaquinol from 1,4-dihydroxy-2-naphthoate: step 2/2. It participates in cofactor biosynthesis; ubiquinone biosynthesis. In terms of biological role, methyltransferase required for the conversion of demethylmenaquinol (DMKH2) to menaquinol (MKH2) and the conversion of 2-polyprenyl-6-methoxy-1,4-benzoquinol (DDMQH2) to 2-polyprenyl-3-methyl-6-methoxy-1,4-benzoquinol (DMQH2). The protein is Ubiquinone/menaquinone biosynthesis C-methyltransferase UbiE of Rickettsia massiliae (strain Mtu5).